A 245-amino-acid chain; its full sequence is Folate receptor gamma (245 aa).

A signal peptide spans 1-22 (MDMAWQMMQLLLLALVTAAGSA). 8 disulfides stabilise this stretch: cysteine 37-cysteine 65, cysteine 57-cysteine 105, cysteine 66-cysteine 109, cysteine 89-cysteine 175, cysteine 96-cysteine 146, cysteine 135-cysteine 209, cysteine 139-cysteine 189, and cysteine 152-cysteine 169. Residues aspartate 103 and tyrosine 107 each coordinate folate. The N-linked (GlcNAc...) asparagine glycan is linked to asparagine 121. Residues 124–128 (WRKER), 157–162 (HKGWNW), and serine 196 contribute to the folate site. An N-linked (GlcNAc...) asparagine glycan is attached at asparagine 161. N-linked (GlcNAc...) asparagine glycosylation is present at asparagine 201.

It belongs to the folate receptor family. As to expression, spleen, thymus, bone marrow, ovarian carcinoma, and uterine carcinoma.

The protein resides in the secreted. In terms of biological role, binds to folate and reduced folic acid derivatives and mediates delivery of 5-methyltetrahydrofolate to the interior of cells. Isoform Short does not bind folate. The protein is Folate receptor gamma (FOLR3) of Homo sapiens (Human).